Reading from the N-terminus, the 141-residue chain is Hemoglobin subunit alpha (141 aa).

The Globin domain occupies 1–141 (VLSAADKGHV…VSTVLTSKYR (141 aa)). Phosphoserine is present on serine 3. N6-succinyllysine is present on residues lysine 7 and lysine 11. Lysine 16 is modified (N6-acetyllysine; alternate). Lysine 16 bears the N6-succinyllysine; alternate mark. At tyrosine 24 the chain carries Phosphotyrosine. Phosphoserine is present on serine 35. An N6-succinyllysine modification is found at lysine 40. Serine 49 is subject to Phosphoserine. Histidine 58 serves as a coordination point for O2. Histidine 87 is a binding site for heme b. Serine 102 carries the phosphoserine modification. A Phosphothreonine modification is found at threonine 108. Position 124 is a phosphoserine (serine 124). Threonine 134 and threonine 137 each carry phosphothreonine. Serine 138 carries the post-translational modification Phosphoserine.

Belongs to the globin family. Heterotetramer of two alpha chains and two beta chains. As to expression, red blood cells.

Functionally, involved in oxygen transport from the lung to the various peripheral tissues. In terms of biological role, hemopressin acts as an antagonist peptide of the cannabinoid receptor CNR1. Hemopressin-binding efficiently blocks cannabinoid receptor CNR1 and subsequent signaling. This is Hemoglobin subunit alpha (HBA) from Macropus giganteus (Eastern gray kangaroo).